The chain runs to 1416 residues: DNA-directed RNA polymerase subunit beta' (1416 aa).

Residues C71, C73, C86, and C89 each coordinate Zn(2+). The Mg(2+) site is built by D461, D463, and D465. Zn(2+)-binding residues include C815, C889, C896, and C899.

Belongs to the RNA polymerase beta' chain family. The RNAP catalytic core consists of 2 alpha, 1 beta, 1 beta' and 1 omega subunit. When a sigma factor is associated with the core the holoenzyme is formed, which can initiate transcription. The cofactor is Mg(2+). Zn(2+) is required as a cofactor.

It carries out the reaction RNA(n) + a ribonucleoside 5'-triphosphate = RNA(n+1) + diphosphate. Functionally, DNA-dependent RNA polymerase catalyzes the transcription of DNA into RNA using the four ribonucleoside triphosphates as substrates. In Haemophilus influenzae (strain 86-028NP), this protein is DNA-directed RNA polymerase subunit beta'.